A 149-amino-acid chain; its full sequence is Large ribosomal subunit protein bL9 (149 aa).

Belongs to the bacterial ribosomal protein bL9 family.

Its function is as follows. Binds to the 23S rRNA. The protein is Large ribosomal subunit protein bL9 of Aliivibrio salmonicida (strain LFI1238) (Vibrio salmonicida (strain LFI1238)).